The primary structure comprises 432 residues: Polyadenylate-binding protein RBP47C (432 aa).

Residues 1–55 (MADVKIQSESESSDSHPVVDNQPPPPPPPPQQPAKEEENQPKTSPTPPPHWMRYP) are disordered. The span at 22–32 (QPPPPPPPPQQ) shows a compositional bias: pro residues. RRM domains follow at residues 101-183 (KTIW…WASF) and 197-276 (LSIF…PATP). The tract at residues 271–293 (IGPATPRKTNGYQQQGGYMPNGT) is disordered. Residues 277-286 (RKTNGYQQQG) show a composition bias toward polar residues. Residues 304–376 (TTIFVGGLDS…QTVRLSWGRN (73 aa)) enclose the RRM 3 domain.

This sequence belongs to the polyadenylate-binding RBP47 family. As to quaternary structure, interacts with the poly(A) tail of mRNA in nucleus. In terms of tissue distribution, expressed in leaves, stems, flowers, and seedlings.

Its subcellular location is the nucleus. It localises to the cytoplasmic granule. Its function is as follows. Heterogeneous nuclear ribonucleoprotein (hnRNP)-protein binding the poly(A) tail of mRNA and probably involved in some steps of pre-mRNA maturation. This is Polyadenylate-binding protein RBP47C (RBP47C) from Arabidopsis thaliana (Mouse-ear cress).